We begin with the raw amino-acid sequence, 143 residues long: Nucleoside diphosphate kinase (143 aa).

Residues lysine 11, phenylalanine 59, arginine 87, threonine 93, arginine 104, and asparagine 114 each coordinate ATP. Catalysis depends on histidine 117, which acts as the Pros-phosphohistidine intermediate.

It belongs to the NDK family. In terms of assembly, homotetramer. It depends on Mg(2+) as a cofactor.

The protein resides in the cytoplasm. It catalyses the reaction a 2'-deoxyribonucleoside 5'-diphosphate + ATP = a 2'-deoxyribonucleoside 5'-triphosphate + ADP. It carries out the reaction a ribonucleoside 5'-diphosphate + ATP = a ribonucleoside 5'-triphosphate + ADP. Major role in the synthesis of nucleoside triphosphates other than ATP. The ATP gamma phosphate is transferred to the NDP beta phosphate via a ping-pong mechanism, using a phosphorylated active-site intermediate. The sequence is that of Nucleoside diphosphate kinase from Pseudoalteromonas translucida (strain TAC 125).